The following is a 78-amino-acid chain: cAMP-dependent protein kinase inhibitor beta (78 aa).

The span at 1–10 shows a compositional bias: basic and acidic residues; sequence MRTDSSKMTD. Residues 1–78 form a disordered region; it reads MRTDSSKMTD…QLEKPQNEEK (78 aa). Residues 33 to 42 show a composition bias toward polar residues; that stretch reads IQSSAATDGT. The span at 53 to 78 shows a compositional bias: basic and acidic residues; that stretch reads SVKEDAKEKDEKTTQDQLEKPQNEEK.

Belongs to the PKI family.

In terms of biological role, extremely potent competitive inhibitor of cAMP-dependent protein kinase activity, this protein interacts with the catalytic subunit of the enzyme after the cAMP-induced dissociation of its regulatory chains. This chain is cAMP-dependent protein kinase inhibitor beta (PKIB), found in Homo sapiens (Human).